A 395-amino-acid chain; its full sequence is L-rhamnonate dehydratase (395 aa).

Substrate contacts are provided by H23 and R49. Residues D215, E241, and E269 each coordinate Mg(2+). Catalysis depends on H319, which acts as the Proton acceptor. E339 lines the substrate pocket.

It belongs to the mandelate racemase/muconate lactonizing enzyme family. RhamD subfamily. Homooctamer; tetramer of dimers. The cofactor is Mg(2+).

The enzyme catalyses L-rhamnonate = 2-dehydro-3-deoxy-L-rhamnonate + H2O. Functionally, catalyzes the dehydration of L-rhamnonate to 2-keto-3-deoxy-L-rhamnonate (KDR). The protein is L-rhamnonate dehydratase (rhmD) of Polaromonas sp. (strain JS666 / ATCC BAA-500).